The sequence spans 66 residues: Putative inactive (E)-beta-ocimene synthase, chloroplastic (66 aa).

A chloroplast-targeting transit peptide spans 1-25 (MAAHNLCFNSAFVCNVHHQKTQHFP).

It belongs to the terpene synthase family. Tpsb subfamily. Expressed exclusively in flowers.

The protein resides in the plastid. It is found in the chloroplast. The sequence is that of Putative inactive (E)-beta-ocimene synthase, chloroplastic (TPS02) from Arabidopsis thaliana (Mouse-ear cress).